We begin with the raw amino-acid sequence, 89 residues long: Small ribosomal subunit protein uS15 (89 aa).

Basic and acidic residues predominate over residues 1–10; it reads MSITAERKAE. The segment at 1–24 is disordered; the sequence is MSITAERKAEVIQGNANKAGDTGS.

It belongs to the universal ribosomal protein uS15 family. Part of the 30S ribosomal subunit. Forms a bridge to the 50S subunit in the 70S ribosome, contacting the 23S rRNA.

Its function is as follows. One of the primary rRNA binding proteins, it binds directly to 16S rRNA where it helps nucleate assembly of the platform of the 30S subunit by binding and bridging several RNA helices of the 16S rRNA. Forms an intersubunit bridge (bridge B4) with the 23S rRNA of the 50S subunit in the ribosome. The chain is Small ribosomal subunit protein uS15 from Rhodopseudomonas palustris (strain HaA2).